Here is a 159-residue protein sequence, read N- to C-terminus: Phosphopantetheine adenylyltransferase (159 aa).

Residue Thr-10 participates in substrate binding. Residues Thr-10–Phe-11 and His-18 each bind ATP. Substrate is bound by residues Lys-42, Met-74, and Arg-88. ATP contacts are provided by residues Gly-89–Arg-91, Glu-99, and Trp-124–Ser-130.

It belongs to the bacterial CoaD family. In terms of assembly, homohexamer. It depends on Mg(2+) as a cofactor.

It localises to the cytoplasm. The catalysed reaction is (R)-4'-phosphopantetheine + ATP + H(+) = 3'-dephospho-CoA + diphosphate. It participates in cofactor biosynthesis; coenzyme A biosynthesis; CoA from (R)-pantothenate: step 4/5. Its function is as follows. Reversibly transfers an adenylyl group from ATP to 4'-phosphopantetheine, yielding dephospho-CoA (dPCoA) and pyrophosphate. This chain is Phosphopantetheine adenylyltransferase, found in Salmonella agona (strain SL483).